The primary structure comprises 142 residues: Potassium voltage-gated channel subfamily E regulatory beta subunit 5 (142 aa).

Residues Asn-2 and Asn-25 are each glycosylated (N-linked (GlcNAc...) asparagine). The chain crosses the membrane as a helical span at residues 61–81 (LYILLIMIFYACLAGGLILAY). Residues 82 to 142 (TRSRKLVEAK…PALAQGAERV (61 aa)) are Cytoplasmic-facing. The disordered stretch occupies residues 119 to 142 (SQAEGRRQLASEGLPALAQGAERV).

The protein belongs to the potassium channel KCNE family. In terms of assembly, interacts with KCNQ1; impairs KCNQ1 localization in lipid rafts and only conducts current upon strong and continued depolarization. As to expression, highly expressed in heart, skeletal muscle, brain, spinal cord and placenta.

It is found in the membrane. Its function is as follows. Potassium channel ancillary subunit that is essential for generation of some native K(+) currents by virtue of formation of heteromeric ion channel complex with voltage-gated potassium (Kv) channel pore-forming alpha subunits. Functions as an inhibitory beta-subunit of the repolarizing cardiac potassium ion channel KCNQ1. This Homo sapiens (Human) protein is Potassium voltage-gated channel subfamily E regulatory beta subunit 5 (KCNE5).